The primary structure comprises 488 residues: Cobyric acid synthase (488 aa).

The GATase cobBQ-type domain maps to 252–442 (RTRICVPILP…VHGLFASDAF (191 aa)). Cys334 acts as the Nucleophile in catalysis. His434 is an active-site residue.

Belongs to the CobB/CobQ family. CobQ subfamily.

It functions in the pathway cofactor biosynthesis; adenosylcobalamin biosynthesis. Catalyzes amidations at positions B, D, E, and G on adenosylcobyrinic A,C-diamide. NH(2) groups are provided by glutamine, and one molecule of ATP is hydrogenolyzed for each amidation. The protein is Cobyric acid synthase of Xanthobacter autotrophicus (strain ATCC BAA-1158 / Py2).